Here is a 130-residue protein sequence, read N- to C-terminus: Fluoride-specific ion channel FluC (130 aa).

The next 4 membrane-spanning stretches (helical) occupy residues 3–23 (FIFL…YFVG), 39–59 (GTFS…HLAV), 67–87 (FGIF…SYGL), and 102–122 (VSYA…GWFL). Residues glycine 77 and threonine 80 each contribute to the Na(+) site.

The protein belongs to the fluoride channel Fluc/FEX (TC 1.A.43) family.

The protein resides in the cell inner membrane. The enzyme catalyses fluoride(in) = fluoride(out). With respect to regulation, na(+) is not transported, but it plays an essential structural role and its presence is essential for fluoride channel function. In terms of biological role, fluoride-specific ion channel. Important for reducing fluoride concentration in the cell, thus reducing its toxicity. This is Fluoride-specific ion channel FluC from Helicobacter pylori (strain Shi470).